Reading from the N-terminus, the 916-residue chain is Protein translocase subunit SecA (916 aa).

Residues Gln-87, 105–109 (GEGKT), and Asp-507 contribute to the ATP site. Zn(2+) is bound by residues Cys-900, Cys-902, Cys-911, and His-912.

This sequence belongs to the SecA family. Monomer and homodimer. Part of the essential Sec protein translocation apparatus which comprises SecA, SecYEG and auxiliary proteins SecDF-YajC and YidC. The cofactor is Zn(2+).

Its subcellular location is the cell inner membrane. The protein localises to the cytoplasm. It carries out the reaction ATP + H2O + cellular proteinSide 1 = ADP + phosphate + cellular proteinSide 2.. Functionally, part of the Sec protein translocase complex. Interacts with the SecYEG preprotein conducting channel. Has a central role in coupling the hydrolysis of ATP to the transfer of proteins into and across the cell membrane, serving both as a receptor for the preprotein-SecB complex and as an ATP-driven molecular motor driving the stepwise translocation of polypeptide chains across the membrane. The polypeptide is Protein translocase subunit SecA (Neisseria meningitidis serogroup C (strain 053442)).